The following is a 338-amino-acid chain: Aspartate--ammonia ligase (338 aa).

This sequence belongs to the class-II aminoacyl-tRNA synthetase family. AsnA subfamily.

The protein resides in the cytoplasm. The enzyme catalyses L-aspartate + NH4(+) + ATP = L-asparagine + AMP + diphosphate + H(+). Its pathway is amino-acid biosynthesis; L-asparagine biosynthesis; L-asparagine from L-aspartate (ammonia route): step 1/1. In Lactobacillus delbrueckii subsp. bulgaricus (strain ATCC 11842 / DSM 20081 / BCRC 10696 / JCM 1002 / NBRC 13953 / NCIMB 11778 / NCTC 12712 / WDCM 00102 / Lb 14), this protein is Aspartate--ammonia ligase.